The primary structure comprises 472 residues: F-box protein At3g03040 (472 aa).

One can recognise an F-box domain in the interval 1–49 (MDLLSSLPDEVRCLILSFLTTKESASTSVLSKKWRNLFALVPNLDFDDS).

The sequence is that of F-box protein At3g03040 from Arabidopsis thaliana (Mouse-ear cress).